The primary structure comprises 1383 residues: DNA-directed RNA polymerase subunit beta (1383 aa).

This sequence belongs to the RNA polymerase beta chain family. In terms of assembly, the RNAP catalytic core consists of 2 alpha, 1 beta, 1 beta' and 1 omega subunit. When a sigma factor is associated with the core the holoenzyme is formed, which can initiate transcription.

It catalyses the reaction RNA(n) + a ribonucleoside 5'-triphosphate = RNA(n+1) + diphosphate. In terms of biological role, DNA-dependent RNA polymerase catalyzes the transcription of DNA into RNA using the four ribonucleoside triphosphates as substrates. The chain is DNA-directed RNA polymerase subunit beta from Bartonella bacilliformis (strain ATCC 35685 / KC583 / Herrer 020/F12,63).